Here is a 255-residue protein sequence, read N- to C-terminus: 5'-nucleotidase SurE (255 aa).

Residues D8, D9, S40, and N93 each coordinate a divalent metal cation.

It belongs to the SurE nucleotidase family. Requires a divalent metal cation as cofactor.

Its subcellular location is the cytoplasm. The catalysed reaction is a ribonucleoside 5'-phosphate + H2O = a ribonucleoside + phosphate. Functionally, nucleotidase that shows phosphatase activity on nucleoside 5'-monophosphates. The protein is 5'-nucleotidase SurE of Rhodopseudomonas palustris (strain BisB18).